A 706-amino-acid chain; its full sequence is Glycine--tRNA ligase beta subunit (706 aa).

The protein belongs to the class-II aminoacyl-tRNA synthetase family. Tetramer of two alpha and two beta subunits.

The protein localises to the cytoplasm. The enzyme catalyses tRNA(Gly) + glycine + ATP = glycyl-tRNA(Gly) + AMP + diphosphate. The polypeptide is Glycine--tRNA ligase beta subunit (Acidobacterium capsulatum (strain ATCC 51196 / DSM 11244 / BCRC 80197 / JCM 7670 / NBRC 15755 / NCIMB 13165 / 161)).